The sequence spans 69 residues: Large ribosomal subunit protein bL32c (69 aa).

It belongs to the bacterial ribosomal protein bL32 family.

The protein localises to the plastid. Its subcellular location is the chloroplast. The sequence is that of Large ribosomal subunit protein bL32c from Pelargonium hortorum (Common geranium).